We begin with the raw amino-acid sequence, 218 residues long: uncharacterized protein (218 aa).

Residues 1–24 (MAAQPQAPSAGGRPRAGKAVKSVA) form a disordered region. The HTH tetR-type domain maps to 28 to 88 (KLSRESIVEG…AVRIRVIDDI (61 aa)). The H-T-H motif DNA-binding region spans 51–70 (TINALATQLGTKGPSLYNHV). Thr-57 carries the phosphothreonine; by PknH modification.

Phosphorylated on Thr-57 by PknH.

This is an uncharacterized protein from Mycobacterium tuberculosis (strain ATCC 25618 / H37Rv).